Here is a 174-residue protein sequence, read N- to C-terminus: Ribosome maturation factor RimM (174 aa).

One can recognise a PRC barrel domain in the interval 98-171; sequence EGEFYFHQII…TIHIEVMEGL (74 aa).

Belongs to the RimM family. As to quaternary structure, binds ribosomal protein uS19.

The protein resides in the cytoplasm. An accessory protein needed during the final step in the assembly of 30S ribosomal subunit, possibly for assembly of the head region. Essential for efficient processing of 16S rRNA. May be needed both before and after RbfA during the maturation of 16S rRNA. It has affinity for free ribosomal 30S subunits but not for 70S ribosomes. This chain is Ribosome maturation factor RimM, found in Bacillus pumilus (strain SAFR-032).